Here is a 437-residue protein sequence, read N- to C-terminus: Ribosomal protein uS12 methylthiotransferase RimO (437 aa).

The MTTase N-terminal domain maps to 3–118 (KKFYITTLGC…AGKILREKFP (116 aa)). [4Fe-4S] cluster-binding residues include cysteine 12, cysteine 48, cysteine 81, cysteine 157, cysteine 161, and cysteine 164. A Radical SAM core domain is found at 143–370 (NYSKPYAYVK…RDSHLEILEE (228 aa)). A TRAM domain is found at 373–437 (ESRIGRTYDA…YEYDMNGTWV (65 aa)).

Belongs to the methylthiotransferase family. RimO subfamily. The cofactor is [4Fe-4S] cluster.

It is found in the cytoplasm. The enzyme catalyses L-aspartate(89)-[ribosomal protein uS12]-hydrogen + (sulfur carrier)-SH + AH2 + 2 S-adenosyl-L-methionine = 3-methylsulfanyl-L-aspartate(89)-[ribosomal protein uS12]-hydrogen + (sulfur carrier)-H + 5'-deoxyadenosine + L-methionine + A + S-adenosyl-L-homocysteine + 2 H(+). In terms of biological role, catalyzes the methylthiolation of an aspartic acid residue of ribosomal protein uS12. The protein is Ribosomal protein uS12 methylthiotransferase RimO of Leptospira interrogans serogroup Icterohaemorrhagiae serovar copenhageni (strain Fiocruz L1-130).